The primary structure comprises 666 residues: MGGLRVDLSGAEIRVDPACGAAADDGGSPPVFLPRQPAAPPLLALDIGGTLIKLVYTASCGGGGAELRFAKFERRRMQECFDFVRAQGLVHRNGSTMGSSKENIALKASGGGAYKYTEDFREKLGVCLDKVDEMDSVVSGANFLLQSVPGAAFTHMNGKKSSVDISPNNLFPYLLVNIGSGVSILKVTGNRKFERVTGTHIGGGTMFGLAKLLTGCKSYDEFLQLSQKGDNFVLDLIVKDICGELVCQKQGLSTSTLASSFGKVITSKKKLTDYRPEDLASTLLSAFTYNIAQISFLVASILHLRRVFFGGSYIRGHKSTMQNISYAIDFWSQSKMQAVFLQHEGYLGALGALMSYGDSGDKNMNLEEMKEEENIHESATPIDETSTDEHNDGNIFPYLLVNIGSGVSMIEVTGNGKFERIIGSHLGGGTILGLARLLTGCSSYDEFLELSQRGNNLAVDLTVGDIYGEHGYPKIGLPASTTAASFGKVSSSRLSEYKVEDLAAALLNSFTYNIGQIAYFVANLSGLKRIFFRGAYICGHEKTMDKISHSLKYWSKGQVQTTFLCHEGFLGTLGAFWSYENMGIDGLAAHEVIREVLLGAPYTGQLPSLPLTHQQDNGEDTTIEGEVERLRHDNAVLKAELERLQRENTELKAKLVKSGKPNTFYH.

Belongs to the type II pantothenate kinase family.

The catalysed reaction is (R)-pantothenate + ATP = (R)-4'-phosphopantothenate + ADP + H(+). The protein operates within cofactor biosynthesis; coenzyme A biosynthesis; CoA from (R)-pantothenate: step 1/5. Its activity is regulated as follows. Regulated by feedback inhibition by malonyl-CoA. In terms of biological role, catalyzes the phosphorylation of pantothenate the first step in CoA biosynthesis. May play a role in the physiological regulation of the intracellular CoA concentration. The sequence is that of Pantothenate kinase 1 from Oryza sativa subsp. japonica (Rice).